We begin with the raw amino-acid sequence, 466 residues long: Asparagine--tRNA ligase (466 aa).

The protein belongs to the class-II aminoacyl-tRNA synthetase family. In terms of assembly, homodimer.

The protein localises to the cytoplasm. The catalysed reaction is tRNA(Asn) + L-asparagine + ATP = L-asparaginyl-tRNA(Asn) + AMP + diphosphate + H(+). This is Asparagine--tRNA ligase from Shewanella amazonensis (strain ATCC BAA-1098 / SB2B).